A 212-amino-acid polypeptide reads, in one-letter code: Thymidylate kinase (212 aa).

10-17 (GLEGAGKS) lines the ATP pocket.

Belongs to the thymidylate kinase family.

It carries out the reaction dTMP + ATP = dTDP + ADP. In terms of biological role, phosphorylation of dTMP to form dTDP in both de novo and salvage pathways of dTTP synthesis. This Vibrio cholerae serotype O1 (strain ATCC 39541 / Classical Ogawa 395 / O395) protein is Thymidylate kinase.